A 37-amino-acid chain; its full sequence is Large ribosomal subunit protein bL36 (37 aa).

This sequence belongs to the bacterial ribosomal protein bL36 family.

In Cutibacterium acnes (strain DSM 16379 / KPA171202) (Propionibacterium acnes), this protein is Large ribosomal subunit protein bL36.